The primary structure comprises 215 residues: Pyridoxine/pyridoxamine 5'-phosphate oxidase (215 aa).

Substrate-binding positions include 9–12 (RRDY) and Lys-69. Residues 64-69 (RILLLK), 79-80 (FT), Lys-86, and Gln-108 contribute to the FMN site. Residues Tyr-126, Arg-130, and Ser-134 each coordinate substrate. Residues 143-144 (QS) and Trp-188 contribute to the FMN site. Residue 194 to 196 (RLH) coordinates substrate. Arg-198 serves as a coordination point for FMN.

Belongs to the pyridoxamine 5'-phosphate oxidase family. Homodimer. FMN serves as cofactor.

The catalysed reaction is pyridoxamine 5'-phosphate + O2 + H2O = pyridoxal 5'-phosphate + H2O2 + NH4(+). It carries out the reaction pyridoxine 5'-phosphate + O2 = pyridoxal 5'-phosphate + H2O2. The protein operates within cofactor metabolism; pyridoxal 5'-phosphate salvage; pyridoxal 5'-phosphate from pyridoxamine 5'-phosphate: step 1/1. Its pathway is cofactor metabolism; pyridoxal 5'-phosphate salvage; pyridoxal 5'-phosphate from pyridoxine 5'-phosphate: step 1/1. Its function is as follows. Catalyzes the oxidation of either pyridoxine 5'-phosphate (PNP) or pyridoxamine 5'-phosphate (PMP) into pyridoxal 5'-phosphate (PLP). This is Pyridoxine/pyridoxamine 5'-phosphate oxidase from Pseudomonas fluorescens (strain ATCC BAA-477 / NRRL B-23932 / Pf-5).